The following is a 299-amino-acid chain: MSSHPPHVIVLIGPTASGKTELAIEIAEYFKTNIHNIDSRQIYKSMDIGTAKPSKIQQKKIRHFLIDIEEPINPINVKQFQEIAQKSIKEEIKKDKLPFLVGGSGLYMNSITKGFFVPDVPPQNNLRKQLEELGQEKCWDLLENCDPLSTKKINFADHVRTIRALEVFYVTGKPLSTLKVQKPPNWKILELGLDRGNLKERIFQRTKNMFLSGIIDETNHLISKYGFDLPILETIGYREARNVLNNHSTIDKAIELTATKTIQFAKRQKTWFRNKNNPLWLNNKNPLKDAIIKIESFLS.

Residue 13–20 (GPTASGKT) coordinates ATP. Substrate is bound at residue 15–20 (TASGKT). The interval 38–41 (DSRQ) is interaction with substrate tRNA.

Belongs to the IPP transferase family. Monomer. It depends on Mg(2+) as a cofactor.

The enzyme catalyses adenosine(37) in tRNA + dimethylallyl diphosphate = N(6)-dimethylallyladenosine(37) in tRNA + diphosphate. Functionally, catalyzes the transfer of a dimethylallyl group onto the adenine at position 37 in tRNAs that read codons beginning with uridine, leading to the formation of N6-(dimethylallyl)adenosine (i(6)A). The polypeptide is tRNA dimethylallyltransferase (Prochlorococcus marinus (strain MIT 9301)).